Here is a 211-residue protein sequence, read N- to C-terminus: FMN-dependent NADH:quinone oxidoreductase 2 (211 aa).

Residue 17–19 (SYS) participates in FMN binding.

Belongs to the azoreductase type 1 family. Homodimer. Requires FMN as cofactor.

The enzyme catalyses 2 a quinone + NADH + H(+) = 2 a 1,4-benzosemiquinone + NAD(+). It catalyses the reaction N,N-dimethyl-1,4-phenylenediamine + anthranilate + 2 NAD(+) = 2-(4-dimethylaminophenyl)diazenylbenzoate + 2 NADH + 2 H(+). Quinone reductase that provides resistance to thiol-specific stress caused by electrophilic quinones. In terms of biological role, also exhibits azoreductase activity. Catalyzes the reductive cleavage of the azo bond in aromatic azo compounds to the corresponding amines. This is FMN-dependent NADH:quinone oxidoreductase 2 from Bacillus licheniformis (strain ATCC 14580 / DSM 13 / JCM 2505 / CCUG 7422 / NBRC 12200 / NCIMB 9375 / NCTC 10341 / NRRL NRS-1264 / Gibson 46).